Reading from the N-terminus, the 218-residue chain is Regulator of G-protein signaling 20 (218 aa).

A compositionally biased stretch (basic and acidic residues) spans 1-10 (MGSERTEMRK). The disordered stretch occupies residues 1–26 (MGSERTEMRKRQMAATQETPGTAQAQ). The segment covering 14-26 (AATQETPGTAQAQ) has biased composition (polar residues). Positions 92–208 (SFDKLMLTPA…MNSAIYKDLL (117 aa)) constitute an RGS domain.

In terms of assembly, forms a complex with G(alpha)z/i2 subunits and mu-opioid receptors; the formation of this complex results in mu-opioid receptor desensitization. Interacts with OPRM1. Post-translationally, fatty acylated. Heavily palmitoylated in the cysteine string motif. In terms of processing, N- and O-glycosylated in synapsomal membranes. Sumoylated by SUMO1 and SUM02 in synaptosomes. The sumoylated forms act as a scaffold for sequestering mu-opioid receptor-activated G(alpha) subunits.

The protein localises to the membrane. The protein resides in the nucleus. It is found in the cytoplasm. In terms of biological role, inhibits signal transduction by increasing the GTPase activity of G protein alpha subunits thereby driving them into their inactive GDP-bound form. Binds selectively to G(z)-alpha and G(alpha)-i2 subunits, accelerates their GTPase activity and regulates their signaling activities. The G(z)-alpha activity is inhibited by the phosphorylation and palmitoylation of the G-protein. Negatively regulates mu-opioid receptor-mediated activation of the G-proteins. The protein is Regulator of G-protein signaling 20 (RGS20) of Gallus gallus (Chicken).